The primary structure comprises 3122 residues: tRNA nuclease CdiA-2 (3122 aa).

The tract at residues 36–205 (RAGVVPAWLS…ATLTTGNPNF (170 aa)) is two-partner system transport domain (TPS). Residues 54-74 (VALAVLVAAGVVPIWVNAQVV) form a helical membrane-spanning segment. The segment at 256-1254 (VVAGSNQVDY…GGSVAIQASG (999 aa)) is FHA-1. The segment at 492-512 (GMTLGGGSLSNQGGRANSQGP) is disordered. Residues 500–512 (LSNQGGRANSQGP) show a composition bias toward polar residues. The receptor binding domain (RBD) stretch occupies residues 1345–1635 (TRRVMQTSGN…SATAVNVLSN (291 aa)). The periplasmic FHA-1 repeat (pFR) stretch occupies residues 1790 to 1845 (TAGNIDLKNTQVFTNSGTVKADTTLALQGKQIDNAFGALQSGGLTSLDTTGNVDLT). Residues 1947-2085 (SDTDLNSATG…TERHVYNSRE (139 aa)) form an FHA-2 region. Disordered stretches follow at residues 2002 to 2031 (TSTI…ALTG), 2151 to 2174 (TTSQ…MSGG), and 2325 to 2352 (IGVQ…GSSI). Residues 2086 to 2825 (THSRSGVVSG…SAGAAMASNV (740 aa)) form a pretoxin (PT) domain region. Low complexity-rich tracts occupy residues 2151 to 2170 (TTSQ…HSGL) and 2325 to 2341 (IGVQ…MQSS). Positions 2342 to 2352 (EDQTIQRGSSI) are enriched in polar residues. The interval 2821 to 3122 (MASNVELYNA…NITIIKPKGN (302 aa)) is C-terminal effector domain (CT), has tRNA nuclease activity. The ELYN C-terminal motif signature appears at 2826–2829 (ELYN). The interval 2948 to 3000 (GATDRTPPSNAILSNSNSDNNSTQGSQSGTVTKTPNPEATGSLSGKPTQIPPL) is disordered. Positions 2948 to 3122 (GATDRTPPSN…NITIIKPKGN (175 aa)) are truncated CT domain, has tRNA nuclease activity, sufficient for interaction with CdiI-2. Residues 2953-2994 (TPPSNAILSNSNSDNNSTQGSQSGTVTKTPNPEATGSLSGKP) are compositionally biased toward polar residues. The segment at 2987–3122 (TGSLSGKPTQ…NITIIKPKGN (136 aa)) is has tRNase activity. Active-site residues include Glu3012, Asp3039, Asp3048, and Lys3067.

The protein in the N-terminal section; belongs to the CdiA toxin family. In terms of assembly, interacts with cognate immunity protein CdiI, which blocks its tRNA nuclease activity. The truncated CT fragment (residues 2948-3122) specifically interacts with cognate CdiI which inhibits the tRNA nuclease activity. The truncated CT is more stable in vitro than the original CT fragment characterized in E.coli.

Its subcellular location is the membrane. It is found in the secreted. The protein resides in the target cell. It localises to the target cell cytoplasm. Functionally, toxic component of a toxin-immunity protein module, which functions as a cellular contact-dependent growth inhibition (CDI) system. CDI modules allow bacteria to communicate with and inhibit the growth of closely related neighboring bacteria in a contact-dependent fashion. The C-terminal 301 residues (the CT fragment) cleaves near the C-terminus of E.coli tRNA1B(Ala), probably preventing tRNA charging, and inhibits growth in E.coli. A truncated CT fragment (residues 2948-3122) has tRNA endonuclease activity on several B.thailandensis tRNAs as well as tRNA2(Arg) where it cleaves after A-70 and U-71. Inactive CT domain binds tRNA, probably in a 1:1 complex. Toxic activity is neutralized by coexpression of the cognate immunity protein CdiI in E.coli, but not by non-cognate immunity proteins from other strains of B.pseudomallei. May use lipopolysaccharide as its target cell receptor. Probably gains access to the cytoplasm of target cells (B.thailandensis strain E264) by using integral inner membrane protein BTH_II0599. Protein BTH_I0359 is also implicated in an unknown fashion in CDI in B.thailandensis strain E264. In terms of biological role, expression of this cdiAIB locus in B.thailandensis confers protection against other bacteria carrying the locus; growth inhibition requires cellular contact. Its function is as follows. The CdiA protein is thought to be exported from the cell through the central lumen of CdiB, the other half of its two-partner system (TPS). The TPS domain probably remains associated with CdiB while the FHA-1 domain forms an extended filament with the receptor-binding domain (RBD) at its extremity; in the secretion arrested state the C-terminus of the RBD domain form a hairpin-like structure as the FHA-2, PT and CT domains are periplasmic. Upon binding to a target cell outer membrane receptor (possibly a lipoprotein in this CDI) a signal is transmitted to activate secretion. The filament elongates slightly, the rest of CdiA is secreted and the FHA-2 domain becomes stably associated with the target cell's outer membrane where it facilitates entry of the toxic CT domain into the target cell periplasm. From there the toxic CT domain is cleaved and gains access to the target cell cytoplasm via an inner membrane protein (probably inner membrane protein BTH_II0599). The polypeptide is tRNA nuclease CdiA-2 (cdiA2) (Burkholderia pseudomallei (strain 1026b)).